A 163-amino-acid chain; its full sequence is Crossover junction endodeoxyribonuclease RuvC (163 aa).

Residues Asp-9, Glu-76, and Asp-148 contribute to the active site. Mg(2+)-binding residues include Asp-9, Glu-76, and Asp-148.

It belongs to the RuvC family. As to quaternary structure, homodimer which binds Holliday junction (HJ) DNA. The HJ becomes 2-fold symmetrical on binding to RuvC with unstacked arms; it has a different conformation from HJ DNA in complex with RuvA. In the full resolvosome a probable DNA-RuvA(4)-RuvB(12)-RuvC(2) complex forms which resolves the HJ. Requires Mg(2+) as cofactor.

Its subcellular location is the cytoplasm. The catalysed reaction is Endonucleolytic cleavage at a junction such as a reciprocal single-stranded crossover between two homologous DNA duplexes (Holliday junction).. Functionally, the RuvA-RuvB-RuvC complex processes Holliday junction (HJ) DNA during genetic recombination and DNA repair. Endonuclease that resolves HJ intermediates. Cleaves cruciform DNA by making single-stranded nicks across the HJ at symmetrical positions within the homologous arms, yielding a 5'-phosphate and a 3'-hydroxyl group; requires a central core of homology in the junction. The consensus cleavage sequence is 5'-(A/T)TT(C/G)-3'. Cleavage occurs on the 3'-side of the TT dinucleotide at the point of strand exchange. HJ branch migration catalyzed by RuvA-RuvB allows RuvC to scan DNA until it finds its consensus sequence, where it cleaves and resolves the cruciform DNA. This is Crossover junction endodeoxyribonuclease RuvC from Nostoc sp. (strain PCC 7120 / SAG 25.82 / UTEX 2576).